A 258-amino-acid polypeptide reads, in one-letter code: Countin-1 (258 aa).

Positions 1 to 21 are cleaved as a signal peptide; sequence MNKLFSLILALFLVNSAVVSS. A Saposin B-type domain is found at 22–106; that stretch reads LDSCSICVDF…EKISVCKTND (85 aa). Cystine bridges form between C25-C102, C28-C96, and C56-C69. N121 and N215 each carry an N-linked (GlcNAc...) asparagine glycan. A compositionally biased stretch (low complexity) spans 233-248; that stretch reads AGSFSGSSQSTQTGAA. The disordered stretch occupies residues 233–258; that stretch reads AGSFSGSSQSTQTGAASGSGSGFALF. A compositionally biased stretch (gly residues) spans 249–258; it reads SGSGSGFALF.

This sequence belongs to the countin family. As to quaternary structure, component of the counting factor (CF) complex, which includes cf60, cf50, cf45-1 and ctnA.

The protein resides in the secreted. Functionally, cell-counting factor that limits the maximum size of the multicellular structure. May down-regulate the expression of gp24, which mediates cell adhesion. The polypeptide is Countin-1 (ctnA) (Dictyostelium discoideum (Social amoeba)).